We begin with the raw amino-acid sequence, 298 residues long: uncharacterized protein (298 aa).

This is an uncharacterized protein from Methanocaldococcus jannaschii (strain ATCC 43067 / DSM 2661 / JAL-1 / JCM 10045 / NBRC 100440) (Methanococcus jannaschii).